Here is a 370-residue protein sequence, read N- to C-terminus: D-alanine--D-alanine ligase (370 aa).

An ATP-grasp domain is found at 144 to 352; the sequence is KKIFADAGIP…YGALIERLVD (209 aa). ATP is bound at residue 177 to 232; sequence EEVLTYPVFVKPANLGSSVGISKATNKKELVDAMTEAFLYDRRVVVEQGVVAREIE. Mg(2+) is bound by residues aspartate 306, glutamate 319, and asparagine 321.

This sequence belongs to the D-alanine--D-alanine ligase family. It depends on Mg(2+) as a cofactor. The cofactor is Mn(2+).

Its subcellular location is the cytoplasm. It carries out the reaction 2 D-alanine + ATP = D-alanyl-D-alanine + ADP + phosphate + H(+). The protein operates within cell wall biogenesis; peptidoglycan biosynthesis. In terms of biological role, cell wall formation. The sequence is that of D-alanine--D-alanine ligase from Listeria monocytogenes serovar 1/2a (strain ATCC BAA-679 / EGD-e).